Here is a 184-residue protein sequence, read N- to C-terminus: Lipoprotein signal peptidase (184 aa).

3 helical membrane-spanning segments follow: residues 23–43 (FLYY…FQVF), 88–108 (PGLV…FLVF), and 110–130 (TSYN…GNFF). Catalysis depends on residues Asp-142 and Asp-157. A helical membrane pass occupies residues 156-176 (ADCCITFSFIGLFLSFLIQFF).

The protein belongs to the peptidase A8 family.

Its subcellular location is the cell membrane. It carries out the reaction Release of signal peptides from bacterial membrane prolipoproteins. Hydrolyzes -Xaa-Yaa-Zaa-|-(S,diacylglyceryl)Cys-, in which Xaa is hydrophobic (preferably Leu), and Yaa (Ala or Ser) and Zaa (Gly or Ala) have small, neutral side chains.. It functions in the pathway protein modification; lipoprotein biosynthesis (signal peptide cleavage). Its function is as follows. This protein specifically catalyzes the removal of signal peptides from prolipoproteins. The protein is Lipoprotein signal peptidase of Mycoplasma pneumoniae (strain ATCC 29342 / M129 / Subtype 1) (Mycoplasmoides pneumoniae).